A 119-amino-acid chain; its full sequence is NADH-quinone oxidoreductase subunit 7 (119 aa).

Transmembrane regions (helical) follow at residues 11-31 (LIYV…GALL), 59-79 (VHFY…AFLW), and 88-108 (LGLY…VGFL).

Belongs to the complex I subunit 3 family. As to quaternary structure, NDH-1 is composed of 15 different subunits, Nqo1 to Nqo15. The complex has a L-shaped structure, with the hydrophobic arm (subunits Nqo7, Nqo8 and Nqo10 to Nqo14) embedded in the membrane and the hydrophilic peripheral arm (subunits Nqo1 to Nqo6, Nqo9 and Nqo15) protruding into the bacterial cytoplasm. The hydrophilic domain contains all the redox centers.

The protein localises to the cell inner membrane. The enzyme catalyses a quinone + NADH + 5 H(+)(in) = a quinol + NAD(+) + 4 H(+)(out). NDH-1 shuttles electrons from NADH, via FMN and iron-sulfur (Fe-S) centers, to quinones in the respiratory chain. The immediate electron acceptor for the enzyme in this species is menaquinone. Couples the redox reaction to proton translocation (for every two electrons transferred, four hydrogen ions are translocated across the cytoplasmic membrane), and thus conserves the redox energy in a proton gradient required for the synthesis of ATP. The sequence is that of NADH-quinone oxidoreductase subunit 7 (nqo7) from Thermus thermophilus (strain ATCC 27634 / DSM 579 / HB8).